Reading from the N-terminus, the 657-residue chain is Hemocyanin A chain (657 aa).

A disulfide bond links C93 and C98. The N-linked (GlcNAc...) asparagine glycan is linked to N167. Cu cation contacts are provided by H194, H198, H224, H344, H348, and H384. 2 disulfide bridges follow: C483-C502 and C562-C609. Residues 594–616 (EGHNGGHDYGGTHAQCGVHGEAY) are disordered.

Belongs to the tyrosinase family. Hemocyanin subfamily. As to quaternary structure, hexamer of a number of different chains, of which A, B, and C have been identified. In terms of tissue distribution, hemolymph.

Its subcellular location is the secreted. It localises to the extracellular space. In terms of biological role, hemocyanins are copper-containing oxygen carriers occurring freely dissolved in the hemolymph of many mollusks and arthropods. The chain is Hemocyanin A chain from Panulirus interruptus (California spiny lobster).